The chain runs to 1423 residues: Histone-lysine N-methyltransferase ATXR7 (1423 aa).

In terms of domain architecture, GYF spans 263–312; it reads HACWFLVDGEGRNHGPHSILELFSWQQHGYVSDAALIRDGENKLRPITLA. Disordered regions lie at residues 923–960, 1057–1097, and 1115–1158; these read CKDH…EGTK, CSIS…SSTD, and LPCH…GRPK. Positions 936–949 are enriched in basic residues; it reads QKVKKAHTSKLKRK. Over residues 950-959 the composition is skewed to basic and acidic residues; it reads NLSDARDEGT. Residues 1057 to 1071 show a composition bias toward polar residues; the sequence is CSISQKGRKSSQSSI. 2 stretches are compositionally biased toward basic and acidic residues: residues 1115-1124 and 1140-1157; these read LPCHTSDKLQ and HTTE…DGRP. The region spanning 1266 to 1383 is the SET domain; the sequence is KHLRFQQSKI…AGEEISYNYK (118 aa). Residue Tyr1382 participates in S-adenosyl-L-methionine binding.

Belongs to the class V-like SAM-binding methyltransferase superfamily. Histone-lysine methyltransferase family. TRX/MLL subfamily. In terms of tissue distribution, expressed in the shoot and root apices, vascular tissues and mesophyll cells of rosette leaves.

The protein resides in the nucleus. The catalysed reaction is L-lysyl(4)-[histone H3] + 3 S-adenosyl-L-methionine = N(6),N(6),N(6)-trimethyl-L-lysyl(4)-[histone H3] + 3 S-adenosyl-L-homocysteine + 3 H(+). It catalyses the reaction L-lysyl(36)-[histone H3] + 2 S-adenosyl-L-methionine = N(6),N(6)-dimethyl-L-lysyl(36)-[histone H3] + 2 S-adenosyl-L-homocysteine + 2 H(+). Functionally, histone methyltransferase involved in regulation of flowering time. Required for the expression of the flowering repressors FLC and MADS-box genes of the MAF family. Required for histone H3 dimethylation on 'Lys-36' H3K36me2 at the FLC locus. Required for histone H3 trimethylation on 'Lys-4' (H3K4me3) at the FLC locus. Prevents trimethylation on 'Lys-27' (H3K27me3) at the same locus. Involved in the control of seed dormancy and germination. The polypeptide is Histone-lysine N-methyltransferase ATXR7 (Arabidopsis thaliana (Mouse-ear cress)).